The chain runs to 163 residues: Phosphopantetheine adenylyltransferase (163 aa).

Residue serine 8 participates in substrate binding. ATP is bound by residues 8–9 (SF) and histidine 16. Positions 40, 72, and 86 each coordinate substrate. Residues 87 to 89 (GLR), glutamate 97, and 122 to 128 (HSFLSSS) each bind ATP.

The protein belongs to the bacterial CoaD family. As to quaternary structure, homohexamer. The cofactor is Mg(2+).

The protein localises to the cytoplasm. The enzyme catalyses (R)-4'-phosphopantetheine + ATP + H(+) = 3'-dephospho-CoA + diphosphate. The protein operates within cofactor biosynthesis; coenzyme A biosynthesis; CoA from (R)-pantothenate: step 4/5. Functionally, reversibly transfers an adenylyl group from ATP to 4'-phosphopantetheine, yielding dephospho-CoA (dPCoA) and pyrophosphate. The protein is Phosphopantetheine adenylyltransferase of Parasynechococcus marenigrum (strain WH8102).